Reading from the N-terminus, the 338-residue chain is Anthranilate phosphoribosyltransferase (338 aa).

5-phospho-alpha-D-ribose 1-diphosphate is bound by residues G81, 84 to 85 (GD), T89, 91 to 94 (NVST), 109 to 117 (KHGNRALSS), and A121. G81 contributes to the anthranilate binding site. Residue S93 participates in Mg(2+) binding. N112 is an anthranilate binding site. Position 167 (R167) interacts with anthranilate. The Mg(2+) site is built by D225 and E226.

The protein belongs to the anthranilate phosphoribosyltransferase family. As to quaternary structure, homodimer. Requires Mg(2+) as cofactor.

It catalyses the reaction N-(5-phospho-beta-D-ribosyl)anthranilate + diphosphate = 5-phospho-alpha-D-ribose 1-diphosphate + anthranilate. The protein operates within amino-acid biosynthesis; L-tryptophan biosynthesis; L-tryptophan from chorismate: step 2/5. In terms of biological role, catalyzes the transfer of the phosphoribosyl group of 5-phosphorylribose-1-pyrophosphate (PRPP) to anthranilate to yield N-(5'-phosphoribosyl)-anthranilate (PRA). The protein is Anthranilate phosphoribosyltransferase of Chelativorans sp. (strain BNC1).